We begin with the raw amino-acid sequence, 330 residues long: Cytoskeleton protein RodZ (330 aa).

At 1-111 (MNTEATQDHQ…LGKRRKKRDG (111 aa)) the chain is on the cytoplasmic side. Residues 19-71 (LRHAREQLGLSQQAVAERLCLKVSTVRDIEDDKAPADLASTFLRGYIRSYARL) enclose the HTH cro/C1-type domain. The segment at residues 30–49 (QQAVAERLCLKVSTVRDIED) is a DNA-binding region (H-T-H motif). Residues 112–132 (WLMSFTWLVLFVVIGLSGAWW) traverse the membrane as a helical; Signal-anchor for type II membrane protein segment. Residues 133 to 330 (WQDHKAQQEE…TLNAEQSPAQ (198 aa)) are Periplasmic-facing. A compositionally biased stretch (polar residues) spans 146–166 (MADQSSAELNGGDANSQNVPL). The disordered stretch occupies residues 146–237 (MADQSSAELN…ASPLPTDQAN (92 aa)). Composition is skewed to low complexity over residues 176 to 202 (TDSA…TPAD) and 216 to 233 (TAGT…PLPT).

The protein belongs to the RodZ family.

It localises to the cell inner membrane. Functionally, cytoskeletal protein that is involved in cell-shape control through regulation of the length of the long axis. The sequence is that of Cytoskeleton protein RodZ from Klebsiella pneumoniae (strain 342).